Reading from the N-terminus, the 599-residue chain is Vitamin B12-dependent ribonucleotide reductase (599 aa).

193 to 197 (PTGTI) is a substrate binding site. The segment at 519–555 (LAQSAPRQAGPAKAATTAPAAKAQEPAAAPSPKQAHN) is disordered. Residues 526-553 (QAGPAKAATTAPAAKAQEPAAAPSPKQA) are compositionally biased toward low complexity.

Belongs to the ribonucleoside diphosphate reductase class-2 family. Adenosylcob(III)alamin is required as a cofactor.

The catalysed reaction is a 2'-deoxyribonucleoside 5'-diphosphate + [thioredoxin]-disulfide + H2O = a ribonucleoside 5'-diphosphate + [thioredoxin]-dithiol. Its function is as follows. Catalyzes the reduction of ribonucleotides to deoxyribonucleotides. May function to provide a pool of deoxyribonucleotide precursors for DNA repair during oxygen limitation and/or for immediate growth after restoration of oxygen. This chain is Vitamin B12-dependent ribonucleotide reductase (nrdJ), found in Streptantibioticus cattleyicolor (Streptomyces cattleya).